Consider the following 454-residue polypeptide: MNNAGLNSEKVAALIQKLNSDPQFVLAQNVGTTHDLLDICLKRATVQGAQHVFQHVVPQEGKPVTNQKSSGRCWIFSCLNVMRLPFMKKFNIEEFEFSQSYLFFWDKVERCYFFLNAFVDTAQKKEPEDGRLVQYLLMNPTNDGGQWDMLVNIVEKYGVVPKKCFPESHTTEATRRMNDILNHKMREFCIRLRNLVHSGATKGEISSTQDAMMEEIFRVVCICLGNPPETFTWEYRDKDKNYHKVGPITPLQFYKEHVKPLFNMEDKICFVNDPRPQHKYNKLYTVDYLSNMVGGRKTLYNNQPIDFLKKMVAASIRDGEAVWFGCDVGKHFNGKLGLSDMNVYDHELVFGVSLKNMNKAERLAFGESLMTHAMTFTAVSEKDDQEGAFVKWRVENSWGEDHGHKGYLCMTDEWFSEYVYEVVVDKKHVPEEVLAVLEQEPIVLPAWDPMGALA.

M1 carries the N-acetylmethionine modification. Residues C73 and H372 contribute to the active site. K391 is modified (N6-acetyllysine). The active site involves N396.

The protein belongs to the peptidase C1 family. Homohexamer. Interacts with NUDT12 (via ANK repeats). As to expression, expressed at relatively higher levels in the stomach, esophagus, spleen, thymus and testis, and at lower levels in the skin, lung and skeletal muscle.

The protein resides in the cytoplasm. The protein localises to the cytoplasmic granule. It catalyses the reaction Inactivates bleomycin B2 (a cytotoxic glycometallopeptide) by hydrolysis of a carboxyamide bond of beta-aminoalanine, but also shows general aminopeptidase activity. The specificity varies somewhat with source, but amino acid arylamides of Met, Leu and Ala are preferred.. Functionally, the normal physiological role of BLM hydrolase is unknown, but it catalyzes the inactivation of the antitumor drug BLM (a glycopeptide) by hydrolyzing the carboxamide bond of its B-aminoalaninamide moiety thus protecting normal and malignant cells from BLM toxicity. Binds single-stranded DNA with higher affinity than double-stranded DNA. May play an important role in the metabolism of antibiotics. The chain is Bleomycin hydrolase (Blmh) from Rattus norvegicus (Rat).